Reading from the N-terminus, the 495-residue chain is Averantin hydroxylase (495 aa).

The chain crosses the membrane as a helical span at residues 12-32 (ILLLIVLTVLTPPSLALYRLW). Residues N258 and N289 are each glycosylated (N-linked (GlcNAc...) asparagine). Residue C436 participates in heme binding.

Belongs to the cytochrome P450 family. The cofactor is heme.

The protein resides in the membrane. It catalyses the reaction (1'S)-averantin + reduced [NADPH--hemoprotein reductase] + O2 = (1'S,5'R)-5'-hydroxyaverantin + oxidized [NADPH--hemoprotein reductase] + H2O. The catalysed reaction is (1'S)-averantin + reduced [NADPH--hemoprotein reductase] + O2 = (1'S,5'S)-5'-hydroxyaverantin + oxidized [NADPH--hemoprotein reductase] + H2O + H(+). It participates in mycotoxin biosynthesis; aflatoxin biosynthesis. Its function is as follows. Averantin hydroxylase; part of the gene cluster that mediates the biosynthesis of aflatoxins, a group of polyketide-derived furanocoumarins, and part of the most toxic and carcinogenic compounds among the known mycotoxins. The four major aflatoxins produced by A.parasiticus are aflatoxin B1 (AFB1), aflatoxin B2 (AFB2), aflatoxin G1 (AFG1) and aflatoxin G2 (AFG2). Within the aflatoxin pathway, the cytochrome P450 monooxygenase aflG catalyzes the hydroxylation of AVN to 5'hydroxyaverantin (HAVN). The biosynthesis of aflatoxins begins with the norsolorinic acid synthase aflC that combines a hexanoyl starter unit produced by the fatty acid synthase aflA/aflB and 7 malonyl-CoA extender units to synthesize the precursor NOR. The second step is the conversion of NOR to averantin and requires the norsolorinic acid ketoreductase aflD, which catalyzes the dehydration of norsolorinic acid to form (1'S)-averantin. The norsolorinic acid reductases aflE and aflF may also play a role in the conversion of NOR to AVN. The cytochrome P450 monooxygenase aflG then catalyzes the hydroxylation of AVN to 5'hydroxyaverantin (HAVN). The next step is performed by the 5'-hydroxyaverantin dehydrogenase aflH that transforms HAVN to 5'-oxoaverantin (OAVN) which is further converted to averufin (AVF) by aflK that plays a dual role in the pathway, as a 5'-oxoaverantin cyclase that mediates conversion of 5'-oxoaverantin, as well as a versicolorin B synthase in a later step in the pathway. The averufin oxidase aflI catalyzes the conversion of AVF to versiconal hemiacetal acetate (VHA). VHA is then the substrate for the versiconal hemiacetal acetate esterase aflJ to yield versiconal (VAL). Versicolorin B synthase aflK then converts VAL to versicolorin B (VERB) by closing the bisfuran ring of aflatoxin which is required for DNA-binding, thus giving to aflatoxin its activity as a mutagen. Then, the activity of the versicolorin B desaturase aflL leads to versicolorin A (VERA). A branch point starts from VERB since it can also be converted to dihydrodemethylsterigmatocystin (DMDHST), probably also by aflL, VERA being a precursor for aflatoxins B1 and G1, and DMDHST for aflatoxins B2 and G2. Next, the versicolorin reductase aflM and the cytochrome P450 monooxygenase aflN are involved in conversion of VERA to demethylsterigmatocystin (DMST). AflX and aflY seem also involved in this step, through probable aflX-mediated epoxide ring-opening step following versicolorin A oxidation and aflY-mediated Baeyer-Villiger oxidation required for the formation of the xanthone ring. The methyltransferase aflO then leads to the modification of DMST to sterigmatocystin (ST), and of DMDHST to dihydrosterigmatocystin (DHST). Both ST and DHST are then substrates of the O-methyltransferase aflP to yield O-methylsterigmatocystin (OMST) and dihydro-O-methylsterigmatocystin (DHOMST), respectively. Finally OMST is converted to aflatoxins B1 and G1, and DHOMST to aflatoxins B2 and G2, via the action of several enzymes including O-methylsterigmatocystin oxidoreductase aflQ, the cytochrome P450 monooxygenase aflU, but also the NADH-dependent flavin oxidoreductase nadA which is specifically required for the synthesis of AFG1. The sequence is that of Averantin hydroxylase from Aspergillus parasiticus (strain ATCC 56775 / NRRL 5862 / SRRC 143 / SU-1).